The following is a 365-amino-acid chain: tRNA(Met) cytidine acetate ligase (365 aa).

ATP contacts are provided by residues 7-20 (IAEF…HKYL), G96, N152, and R175.

The protein belongs to the TmcAL family.

Its subcellular location is the cytoplasm. It catalyses the reaction cytidine(34) in elongator tRNA(Met) + acetate + ATP = N(4)-acetylcytidine(34) in elongator tRNA(Met) + AMP + diphosphate. Functionally, catalyzes the formation of N(4)-acetylcytidine (ac(4)C) at the wobble position of elongator tRNA(Met), using acetate and ATP as substrates. First activates an acetate ion to form acetyladenylate (Ac-AMP) and then transfers the acetyl group to tRNA to form ac(4)C34. In Streptococcus pneumoniae (strain JJA), this protein is tRNA(Met) cytidine acetate ligase.